Reading from the N-terminus, the 205-residue chain is Octanoyltransferase (205 aa).

The BPL/LPL catalytic domain occupies 29–204 (AETPDEIWIV…HLLQQLDQKN (176 aa)). Substrate-binding positions include 68–75 (RGGQVTYH), 135–137 (ALG), and 148–150 (GVS). The active-site Acyl-thioester intermediate is C166.

The protein belongs to the LipB family.

The protein localises to the cytoplasm. The enzyme catalyses octanoyl-[ACP] + L-lysyl-[protein] = N(6)-octanoyl-L-lysyl-[protein] + holo-[ACP] + H(+). It functions in the pathway protein modification; protein lipoylation via endogenous pathway; protein N(6)-(lipoyl)lysine from octanoyl-[acyl-carrier-protein]: step 1/2. Its function is as follows. Catalyzes the transfer of endogenously produced octanoic acid from octanoyl-acyl-carrier-protein onto the lipoyl domains of lipoate-dependent enzymes. Lipoyl-ACP can also act as a substrate although octanoyl-ACP is likely to be the physiological substrate. In Dechloromonas aromatica (strain RCB), this protein is Octanoyltransferase.